A 563-amino-acid polypeptide reads, in one-letter code: Arginine--tRNA ligase (563 aa).

Residues 121-131 (PNIAKPFSIGH) carry the 'HIGH' region motif.

It belongs to the class-I aminoacyl-tRNA synthetase family. Monomer.

Its subcellular location is the cytoplasm. The enzyme catalyses tRNA(Arg) + L-arginine + ATP = L-arginyl-tRNA(Arg) + AMP + diphosphate. The chain is Arginine--tRNA ligase from Streptococcus thermophilus (strain CNRZ 1066).